The chain runs to 809 residues: Protein PHOX3 (809 aa).

The tract at residues 1-22 (MEKQNEEISTDDAETSQSQLVD) is disordered. TPR repeat units follow at residues 126–159 (AQGL…LPKD), 164–199 (SHVR…TPDH), 200–233 (NKAL…DPKN), 235–265 (MASE…PPDY), and 274–311 (AALW…EKKN). A disordered region spans residues 288 to 339 (TKKSNQVEEKSEGEGEDVEPEKKNNVLAEKGKEKIKMKVKGKQSDKRSDTSK). Ser298 bears the Phosphoserine mark. Positions 307–339 (PEKKNNVLAEKGKEKIKMKVKGKQSDKRSDTSK) are enriched in basic and acidic residues. The region spanning 359 to 438 (NKDVKFVYSD…GTMRFYVVEV (80 aa)) is the PB1 domain. TPR repeat units lie at residues 508 to 541 (SEAM…SLLN), 563 to 597 (ESVS…KPEC), and 615 to 648 (SWYY…IKKS). Residues 656–686 (ETGKESEPSQAGKTDCLTHEKDLGSSTQNNP) form a disordered region. The stretch at 709 to 741 (SIMEYKLDQPFWRESLEAAMEKFELAGTCKDDV) is one TPR 9 repeat.

Functionally, carboxylate clamp type tetratricopeptide repeat protein that may act as a potential Hsp90/Hsp70 co-chaperone. Contributes to polar growth of root hairs. This Arabidopsis thaliana (Mouse-ear cress) protein is Protein PHOX3.